Consider the following 256-residue polypeptide: Floral homeotic protein APETALA 1 (256 aa).

The region spanning 1–61 (MGRGRVQLKR…GKLFEYSTDS (61 aa)) is the MADS-box domain. The K-box domain occupies 88–178 (NTNWSMEYNR…SKQIKEREKI (91 aa)). Residues 184–206 (EQWDQQNHGHNMPPPPPPQQHQI) are disordered.

As to quaternary structure, homodimer capable of binding to CArG-box sequences.

The protein resides in the nucleus. In terms of biological role, transcription factor that promotes early floral meristem identity in synergy with LEAFY. Displays a redundant function with CAULIFLOWER in the up-regulation of LEAFY. Required subsequently for the transition of an inflorescence meristem into a floral meristem, and for the normal development of sepals and petals in flowers. Regulates positively B class homeotic proteins. The sequence is that of Floral homeotic protein APETALA 1 (AP1) from Arabidopsis lyrata subsp. lyrata (Lyre-leaved rock-cress).